Reading from the N-terminus, the 204-residue chain is Abscisic acid receptor PYL3 (204 aa).

The tract at residues 40 to 191 (HEPRDHQCSS…NLKSLAEVSE (152 aa)) is START-like. Cysteines 47 and 172 form a disulfide. Abscisate is bound by residues Lys76, 104–109 (ATRSTE), 131–137 (RLKNYSS), and Glu156. Positions 100–104 (SGLPA) match the Gate loop motif. The short motif at 130–132 (HRL) is the Latch loop element.

This sequence belongs to the PYR/PYL/RCAR abscisic acid intracellular receptor family. As to quaternary structure, monomer. Interacts with PP2C50. Binding to PP2C50 is dependent on the presence of abscisic acid (ABA). Interacts with PP2C30 and PP2C53.

It is found in the cytoplasm. It localises to the cytosol. The protein resides in the nucleus. Functionally, involved in abscisic acid (ABA) signaling during seed germination and abiotic stress response. Acts as a positive regulator of ABA-mediated inhibition of seed germination, and tolerance to drought and cold stresses. Together with PP2C50 and SAPK10, may form an ABA signaling module involved in stress response. Inhibits the protein phosphatases PP2C06 and PP2C09 when activated by abscisic acid (ABA). This Oryza sativa subsp. japonica (Rice) protein is Abscisic acid receptor PYL3.